Here is a 95-residue protein sequence, read N- to C-terminus: Small ribosomal subunit protein mS37 (95 aa).

The region spanning 27–69 (ANRCLVLMSNLLQCWSSNGHMNPVCEKLATDLKACTSQNVMGS) is the CHCH domain. Short sequence motifs (cx9C motif) lie at residues 30–40 (CLVLMSNLLQC) and 51–61 (CEKLATDLKAC). Cystine bridges form between C30-C61 and C40-C51.

Belongs to the mitochondrion-specific ribosomal protein mS37 family. Component of the mitochondrial small ribosomal subunit.

The protein resides in the mitochondrion. In terms of biological role, involved in mitochondrial genome encoded proteins translation. This Eremothecium gossypii (strain ATCC 10895 / CBS 109.51 / FGSC 9923 / NRRL Y-1056) (Yeast) protein is Small ribosomal subunit protein mS37 (MRP10).